The chain runs to 317 residues: Ferrochelatase (317 aa).

His192 and Glu271 together coordinate Fe cation.

Belongs to the ferrochelatase family.

It localises to the cytoplasm. It catalyses the reaction heme b + 2 H(+) = protoporphyrin IX + Fe(2+). It participates in porphyrin-containing compound metabolism; protoheme biosynthesis; protoheme from protoporphyrin-IX: step 1/1. Catalyzes the ferrous insertion into protoporphyrin IX. The sequence is that of Ferrochelatase from Geobacter sp. (strain M21).